The primary structure comprises 105 residues: Heat shock protein HspQ (105 aa).

The interval 75–105 (SELQDEHPEQPSMDELAQTIRKQLQAPRLRN) is disordered.

Belongs to the HspQ family.

The protein resides in the cytoplasm. Involved in the degradation of certain denaturated proteins, including DnaA, during heat shock stress. This Escherichia coli O127:H6 (strain E2348/69 / EPEC) protein is Heat shock protein HspQ.